The chain runs to 560 residues: Membrane protein insertase YidC (560 aa).

The chain crosses the membrane as a helical span at residues 1–21 (MDIKRTILIAALAIVSYVMVL). Residues 42-66 (VAPGLPDGVPAANNGASADVPSANA) form a disordered region. A run of 5 helical transmembrane segments spans residues 341 to 361 (LELT…FWLL), 367 to 387 (LLGN…GLFF), 437 to 457 (LGGC…YWVL), 468 to 488 (WMLW…PIIM), and 515 to 535 (PIIF…YWVV).

This sequence belongs to the OXA1/ALB3/YidC family. Type 1 subfamily. In terms of assembly, interacts with the Sec translocase complex via SecD. Specifically interacts with transmembrane segments of nascent integral membrane proteins during membrane integration.

The protein resides in the cell inner membrane. Required for the insertion and/or proper folding and/or complex formation of integral membrane proteins into the membrane. Involved in integration of membrane proteins that insert both dependently and independently of the Sec translocase complex, as well as at least some lipoproteins. Aids folding of multispanning membrane proteins. The chain is Membrane protein insertase YidC from Pseudomonas putida (strain W619).